The primary structure comprises 296 residues: Small ribosomal subunit protein uS2 (296 aa).

2 disordered regions span residues 1–24 and 270–296; these read MNTKKEEVVSSPEATVEKKQTQSQ and HELKKSEEASEVKAASTKEKLTEEASQ.

It belongs to the universal ribosomal protein uS2 family.

The protein is Small ribosomal subunit protein uS2 of Mycoplasmopsis synoviae (strain 53) (Mycoplasma synoviae).